The sequence spans 144 residues: Large ribosomal subunit protein uL11 (144 aa).

Belongs to the universal ribosomal protein uL11 family. As to quaternary structure, part of the ribosomal stalk of the 50S ribosomal subunit. Interacts with L10 and the large rRNA to form the base of the stalk. L10 forms an elongated spine to which L12 dimers bind in a sequential fashion forming a multimeric L10(L12)X complex. Contacts the CTC protein (RL25). Post-translationally, one or more lysine residues are methylated.

In terms of biological role, forms part of the ribosomal stalk which helps the ribosome interact with GTP-bound translation factors. This is Large ribosomal subunit protein uL11 from Deinococcus radiodurans (strain ATCC 13939 / DSM 20539 / JCM 16871 / CCUG 27074 / LMG 4051 / NBRC 15346 / NCIMB 9279 / VKM B-1422 / R1).